The chain runs to 284 residues: Bifunctional protein FolD (284 aa).

NADP(+)-binding positions include 166-168 (GAS), serine 191, and isoleucine 232.

The protein belongs to the tetrahydrofolate dehydrogenase/cyclohydrolase family. Homodimer.

The catalysed reaction is (6R)-5,10-methylene-5,6,7,8-tetrahydrofolate + NADP(+) = (6R)-5,10-methenyltetrahydrofolate + NADPH. It carries out the reaction (6R)-5,10-methenyltetrahydrofolate + H2O = (6R)-10-formyltetrahydrofolate + H(+). It functions in the pathway one-carbon metabolism; tetrahydrofolate interconversion. Functionally, catalyzes the oxidation of 5,10-methylenetetrahydrofolate to 5,10-methenyltetrahydrofolate and then the hydrolysis of 5,10-methenyltetrahydrofolate to 10-formyltetrahydrofolate. The polypeptide is Bifunctional protein FolD (Thiobacillus denitrificans (strain ATCC 25259 / T1)).